We begin with the raw amino-acid sequence, 615 residues long: MAPSKRKASAPPQTSHVNGNPSADKKRKTTTDAPPTNPNTSSDPLRAPHPFYKDSETHGIVLRKFYPHEMSNARAQAYNDNELPRPIETLSAALAETAALRKSLPVRQAVVHWFKMDLRLHDNRSLWLASQKAKEAGVPLICLYVLSPEDLEAHLRAPIRVDFMLRTLEVLKTDLEDLGIPLWVETVEKRKEVPTKIKELMKSWGASHLFCAMEYEVDELRREAKLVKLLAEGEKGEKMAADVVHDTCVVMPGALQSGSGGQYAVYSPWFRAWIKHIEENPECLEIYEKPGPNPPGTKEKHENLFACSIPEAPEGKRLRDDEKARYHSLWPAGEHEALKRLEKFCDEAIGKYAERRNIPAMQGTSNLSVHFASGTLSARTAIRTARDRNNTKKLNGGNEGIQRWISEVAWRDFYKHVLVHWPYVCMNKPFKPTYSNIEWSYNVDHFHAWTQGRTGFPIIDAAMRQVLSTGYMHNRLRMIVASFLAKDLLVDWRMGERYFMEHLIDGDFASNNGGWGFAASVGVDPQPYFRVFNPLLQSEKFDPDGDYIRKWVEELRDLPELKGGKGGEIHDPYGRGSEKVKKKLEEKGYPRPIVEHSGARDRALDAYKRGLARDL.

The segment at 1–53 is disordered; that stretch reads MAPSKRKASAPPQTSHVNGNPSADKKRKTTTDAPPTNPNTSSDPLRAPHPFYK. Residues 11–21 are compositionally biased toward polar residues; sequence PPQTSHVNGNP. Low complexity predominate over residues 31-40; that stretch reads TDAPPTNPNT. Positions 108 to 249 constitute a Photolyase/cryptochrome alpha/beta domain; sequence QAVVHWFKMD…AADVVHDTCV (142 aa). Tyrosine 352 lines the FAD pocket. A DNA-binding site is contributed by arginine 356. 364–368 serves as a coordination point for FAD; sequence TSNLS. Interaction with DNA stretches follow at residues 407 to 414 and 474 to 475; these read EVAWRDFY and NR. Position 505–507 (505–507) interacts with FAD; sequence DGD. Residue glutamine 537 participates in DNA binding.

This sequence belongs to the DNA photolyase class-1 family. In terms of assembly, monomer. Requires FAD as cofactor. (6R)-5,10-methylene-5,6,7,8-tetrahydrofolate is required as a cofactor.

It carries out the reaction cyclobutadipyrimidine (in DNA) = 2 pyrimidine residues (in DNA).. Functionally, involved in repair of UV radiation-induced DNA damage. Catalyzes the light-dependent monomerization (300-600 nm) of cyclobutyl pyrimidine dimers (in cis-syn configuration), which are formed between adjacent bases on the same DNA strand upon exposure to ultraviolet radiation. This is Deoxyribodipyrimidine photo-lyase (phr) from Neurospora crassa (strain ATCC 24698 / 74-OR23-1A / CBS 708.71 / DSM 1257 / FGSC 987).